The chain runs to 118 residues: Large ribosomal subunit protein bL21c (118 aa).

Belongs to the bacterial ribosomal protein bL21 family. In terms of assembly, part of the 50S ribosomal subunit.

It is found in the plastid. The protein localises to the chloroplast. Its function is as follows. This protein binds to 23S rRNA. This is Large ribosomal subunit protein bL21c from Anthoceros angustus (Hornwort).